The following is a 444-amino-acid chain: Tol-Pal system protein TolB (444 aa).

The first 19 residues, 1–19 (MRNIIYFILSLLFSVTSYA), serve as a signal peptide directing secretion.

The protein belongs to the TolB family. The Tol-Pal system is composed of five core proteins: the inner membrane proteins TolA, TolQ and TolR, the periplasmic protein TolB and the outer membrane protein Pal. They form a network linking the inner and outer membranes and the peptidoglycan layer.

The protein localises to the periplasm. In terms of biological role, part of the Tol-Pal system, which plays a role in outer membrane invagination during cell division and is important for maintaining outer membrane integrity. The sequence is that of Tol-Pal system protein TolB from Rickettsia peacockii (strain Rustic).